The following is a 658-amino-acid chain: ATP-dependent RNA helicase MSS116, mitochondrial (658 aa).

Residues 1–35 (MFRVTGIATARAVALQPFRAPLGVIRRFGISATAS) constitute a mitochondrion transit peptide. Positions 40-79 (HGHDMQSRNGSRWDSRRQGDRRSSRWEGRGSDREDGERGS) are enriched in basic and acidic residues. The interval 40–104 (HGHDMQSRNG…DGAAREGFSL (65 aa)) is disordered. A Q motif motif is present at residues 126 to 154 (TLVEEGVLSNELYEMLQSRGFDKLTPVQQ). A Helicase ATP-binding domain is found at 158 to 343 (KPILQTEHDV…NSIMNHAKCL (186 aa)). 171–178 (AKTGTGKT) contributes to the ATP binding site. The DEAD box motif lies at 284–287 (DEAD). Residues 372–528 (NITASLYKIR…TFDAAAQELS (157 aa)) form the Helicase C-terminal domain.

It belongs to the DEAD box helicase family. DDX18/HAS1 subfamily.

The protein localises to the mitochondrion matrix. The enzyme catalyses ATP + H2O = ADP + phosphate + H(+). ATP-dependent RNA helicase required for mitochondrial splicing of group I and II introns. Also required for efficient mitochondrial translation. This chain is ATP-dependent RNA helicase MSS116, mitochondrial (MSS116), found in Eremothecium gossypii (strain ATCC 10895 / CBS 109.51 / FGSC 9923 / NRRL Y-1056) (Yeast).